Consider the following 152-residue polypeptide: UPF0266 membrane protein YobD (152 aa).

The next 3 membrane-spanning stretches (helical) occupy residues Leu-6–Met-26, Val-45–His-65, and Ala-67–Ile-87.

The protein belongs to the UPF0266 family.

It localises to the cell inner membrane. This chain is UPF0266 membrane protein YobD, found in Salmonella newport (strain SL254).